Consider the following 427-residue polypeptide: Glutamate-1-semialdehyde 2,1-aminomutase (427 aa).

The residue at position 265 (lysine 265) is an N6-(pyridoxal phosphate)lysine.

The protein belongs to the class-III pyridoxal-phosphate-dependent aminotransferase family. HemL subfamily. In terms of assembly, homodimer. Pyridoxal 5'-phosphate is required as a cofactor.

Its subcellular location is the cytoplasm. It catalyses the reaction (S)-4-amino-5-oxopentanoate = 5-aminolevulinate. It functions in the pathway porphyrin-containing compound metabolism; protoporphyrin-IX biosynthesis; 5-aminolevulinate from L-glutamyl-tRNA(Glu): step 2/2. In Nitratiruptor sp. (strain SB155-2), this protein is Glutamate-1-semialdehyde 2,1-aminomutase.